The sequence spans 282 residues: Bis(5'-nucleosyl)-tetraphosphatase, symmetrical (282 aa).

The protein belongs to the Ap4A hydrolase family.

It catalyses the reaction P(1),P(4)-bis(5'-adenosyl) tetraphosphate + H2O = 2 ADP + 2 H(+). In terms of biological role, hydrolyzes diadenosine 5',5'''-P1,P4-tetraphosphate to yield ADP. The sequence is that of Bis(5'-nucleosyl)-tetraphosphatase, symmetrical from Citrobacter koseri (strain ATCC BAA-895 / CDC 4225-83 / SGSC4696).